Consider the following 306-residue polypeptide: Probable rRNA-processing protein EBP2 (306 aa).

Position 1 is an N-acetylmethionine (methionine 1). Disordered regions lie at residues 1 to 20 (MDTP…LASD), 75 to 103 (GPVP…DDFQ), and 150 to 169 (IRQK…KAKQ). Threonine 3 is modified (phosphothreonine). Serine 7, serine 9, serine 11, and serine 13 each carry phosphoserine. Positions 81–90 (SETQPTPQNQ) are enriched in polar residues. Over residues 91–103 (DQKKGVNPEDDFQ) the composition is skewed to basic and acidic residues. Lysine 93 participates in a covalent cross-link: Glycyl lysine isopeptide (Lys-Gly) (interchain with G-Cter in SUMO2). Residues 135 to 171 (DYFAEMAKSDQQMQKIRQKLQTKQAAMEKSEKAKQLR) are a coiled coil. Residues lysine 179 and lysine 218 each participate in a glycyl lysine isopeptide (Lys-Gly) (interchain with G-Cter in SUMO2) cross-link. Basic and acidic residues predominate over residues 213–224 (LEGDQKPVERSA). Positions 213-306 (LEGDQKPVER…ARQKLKSKAR (94 aa)) are disordered. A phosphoserine mark is found at serine 264 and serine 270. Residues 274-306 (KVAHGKGSRRPGKKGANKRPGKRARQKLKSKAR) show a composition bias toward basic residues.

The protein belongs to the EBP2 family. In terms of assembly, interacts with WDR46.

The protein localises to the nucleus. The protein resides in the nucleolus. In terms of biological role, required for the processing of the 27S pre-rRNA. This chain is Probable rRNA-processing protein EBP2 (Ebna1bp2), found in Mus musculus (Mouse).